Consider the following 540-residue polypeptide: MKEPRIFPRERPTPWTRAPLPPRGRLDGSLGPQGGPVLNTGHPLGMNSDPFLMASSSLGGNLAPFPRNPSPFPTSSGSLASNPAPFPAGARDPGLASFPRGMNPTSTGAVSFPRPGGLLGPSPGSTLNPRAGALPGPGPLSNPRLGSLPGPGPVSNPRPSGLLGTGPDPRSGGPMGPGSGPSLRAGVLLTPGNGPPNPRPVGLGPGPSPNLRSGFVGTNPAPRSSMFPGPGLGPNPRSSGLGPGLGPNPRAGGLGPGPNLDARAGGLLGTGSGLNLRMAGPQGLDLAPILRAAGLLGANSASFSQASGNMGTSPSSMARLPGPIGPNSGPGSRGIGLPGPNPSPLSRAPGPVGPNSAHFARPAGPMGVNANPFPRGTGSGGLNPAAFSQSSNTLASNPINFQRSAGLQGSSPAVFPRASGPLGPNPANFPRATGLQGPSPATFPRSIGPLGPGQVTFPRPAPRPLGSSPAGPVGINPAPFARPTGTLGVNPASFPRMNGPVSKTLVPFPRVGSLPGTNPAAFPRPGGPMAAMYPNGMLPP.

A compositionally biased stretch (basic and acidic residues) spans 1–12; that stretch reads MKEPRIFPRERP. Disordered regions lie at residues 1–264 and 304–389; these read MKEP…DARA and SQAS…AFSQ. Low complexity-rich tracts occupy residues 113–125 and 180–192; these read PRPG…SPGS and GPSL…LTPG. Residues 304-316 show a composition bias toward polar residues; that stretch reads SQASGNMGTSPSS. A Phosphoserine modification is found at S313. Residues 321–330 show a composition bias toward low complexity; it reads PGPIGPNSGP. At R375 the chain carries Asymmetric dimethylarginine. R403 bears the Omega-N-methylarginine mark. S439 carries the phosphoserine modification. The interval 516-540 is disordered; sequence GTNPAAFPRPGGPMAAMYPNGMLPP.

Belongs to the DERPC family.

It is found in the nucleus. In terms of biological role, potential tumor suppressor. The polypeptide is Decreased expression in renal and prostate cancer protein (Bos taurus (Bovine)).